The following is a 470-amino-acid chain: Argininosuccinate lyase (470 aa).

The protein belongs to the lyase 1 family. Argininosuccinate lyase subfamily.

The protein resides in the cytoplasm. The catalysed reaction is 2-(N(omega)-L-arginino)succinate = fumarate + L-arginine. It functions in the pathway amino-acid biosynthesis; L-arginine biosynthesis; L-arginine from L-ornithine and carbamoyl phosphate: step 3/3. This is Argininosuccinate lyase from Prochlorococcus marinus (strain MIT 9303).